Consider the following 209-residue polypeptide: MGKVHVLDHPLIQHKLSYIRDKHTGTKEFRELVDEVAALMAFEVTRDLPLEAAEIETPVGPAKVKKLAGKKLGLVPILRAGIGMSEGILRMIPAARVGHVGLYRDPETLKPHEYYVKLPNDVEERELLVIDPMLATGGSVVEAINSLKKRGAKSMRLICLVAAPEGVAYVQKEHPDVDIYLAALDEKLNEKGYIVPGLGDAGDRLFGTK.

5-phospho-alpha-D-ribose 1-diphosphate is bound by residues R79, R104, and 131–139 (DPMLATGGS). Residues I194 and 199 to 201 (GDA) each bind uracil. Residue D200 participates in 5-phospho-alpha-D-ribose 1-diphosphate binding.

It belongs to the UPRTase family. The cofactor is Mg(2+).

The enzyme catalyses UMP + diphosphate = 5-phospho-alpha-D-ribose 1-diphosphate + uracil. The protein operates within pyrimidine metabolism; UMP biosynthesis via salvage pathway; UMP from uracil: step 1/1. Allosterically activated by GTP. In terms of biological role, catalyzes the conversion of uracil and 5-phospho-alpha-D-ribose 1-diphosphate (PRPP) to UMP and diphosphate. The sequence is that of Uracil phosphoribosyltransferase from Shouchella clausii (strain KSM-K16) (Alkalihalobacillus clausii).